The primary structure comprises 805 residues: FAD-dependent monooxygenase verC1 (805 aa).

A signal peptide spans 1-20 (MTFRVIIVGGGVAGLTLASA). FAD contacts are provided by E32, A46, and R107. Residue N132 is glycosylated (N-linked (GlcNAc...) asparagine). Y214 is a catalytic residue. The FAD site is built by D306 and A319. 7 consecutive transmembrane segments (helical) span residues 551–571 (ALTMAQIPTLFTFYGQMAGLG), 604–624 (IAVLPAIIVSYYIPLSAAFFW), 632–652 (SWLFVWQMHPIWTAITLYLFS), 671–691 (LPVIKFSMTVLVIGAAGFWMW), 703–723 (VFFPTAVPSTQAPFAACVCAI), 726–746 (WDMLSTFGSTFLWLGYLIWDL), and 761–781 (IYGVAAFVALGPGAAIGLGWL).

The protein belongs to the paxM FAD-dependent monooxygenase family.

It localises to the membrane. It participates in secondary metabolite biosynthesis; terpenoid biosynthesis. It functions in the pathway mycotoxin biosynthesis. In terms of biological role, FAD-dependent monooxygenase; part of the gene cluster that mediates the biosynthesis of the neurotoxin verrucosidin, a methylated alpha-pyrone polyketide that inhibits oxidative phosphorylation in mitochondria and thereby causes neurological diseases. The carbon backbone of verrucosidin is synthesized by the HR-PKS verA, and further modified by the other verrucodidin cluster enzymes. This Penicillium polonicum protein is FAD-dependent monooxygenase verC1.